The following is a 233-amino-acid chain: Adenosine 5'-phosphosulfate reductase (233 aa).

Residues Cys120, Cys121, Cys203, and Cys206 each contribute to the [4Fe-4S] cluster site. Cys229 (nucleophile; cysteine thiosulfonate intermediate) is an active-site residue.

The protein belongs to the PAPS reductase family. CysH subfamily. The cofactor is [4Fe-4S] cluster.

It localises to the cytoplasm. The enzyme catalyses [thioredoxin]-disulfide + sulfite + AMP + 2 H(+) = adenosine 5'-phosphosulfate + [thioredoxin]-dithiol. Its pathway is sulfur metabolism; hydrogen sulfide biosynthesis; sulfite from sulfate. Its function is as follows. Catalyzes the formation of sulfite from adenosine 5'-phosphosulfate (APS) using thioredoxin as an electron donor. This is Adenosine 5'-phosphosulfate reductase from Bacillus pumilus (strain SAFR-032).